Reading from the N-terminus, the 161-residue chain is Cytochrome c-type biogenesis protein CcmE (161 aa).

Over 1 to 8 (MNPRRKKR) the chain is Cytoplasmic. Residues 9–29 (LGLILALFVGISATVGLMLYA) traverse the membrane as a helical; Signal-anchor for type II membrane protein segment. The Periplasmic segment spans residues 30–161 (LNQNMDLFYT…TEQQKQGTGQ (132 aa)). Positions 129 and 133 each coordinate heme. Residues 142–161 (MKKTHEPLQYTEQQKQGTGQ) are disordered. The segment covering 151-161 (YTEQQKQGTGQ) has biased composition (polar residues).

Belongs to the CcmE/CycJ family.

Its subcellular location is the cell inner membrane. Its function is as follows. Heme chaperone required for the biogenesis of c-type cytochromes. Transiently binds heme delivered by CcmC and transfers the heme to apo-cytochromes in a process facilitated by CcmF and CcmH. In Aliivibrio fischeri (strain MJ11) (Vibrio fischeri), this protein is Cytochrome c-type biogenesis protein CcmE.